Here is a 165-residue protein sequence, read N- to C-terminus: Ribosome maturation factor RimM (165 aa).

The PRC barrel domain maps to 94 to 165 (EDEFYIADLN…YGILNYKREV (72 aa)).

The protein belongs to the RimM family. In terms of assembly, binds ribosomal protein uS19.

The protein localises to the cytoplasm. An accessory protein needed during the final step in the assembly of 30S ribosomal subunit, possibly for assembly of the head region. Essential for efficient processing of 16S rRNA. May be needed both before and after RbfA during the maturation of 16S rRNA. It has affinity for free ribosomal 30S subunits but not for 70S ribosomes. The protein is Ribosome maturation factor RimM of Rickettsia canadensis (strain McKiel).